The sequence spans 387 residues: Succinate--CoA ligase [ADP-forming] subunit beta (387 aa).

One can recognise an ATP-grasp domain in the interval 9–244 (KRLLAEEGVP…STQQDGREIT (236 aa)). Residues K46, 53–55 (GRG), E99, S102, and E107 each bind ATP. Residues N199 and D213 each contribute to the Mg(2+) site. Residues N264 and 321-323 (GIT) contribute to the substrate site.

Belongs to the succinate/malate CoA ligase beta subunit family. As to quaternary structure, heterotetramer of two alpha and two beta subunits. It depends on Mg(2+) as a cofactor.

The catalysed reaction is succinate + ATP + CoA = succinyl-CoA + ADP + phosphate. It catalyses the reaction GTP + succinate + CoA = succinyl-CoA + GDP + phosphate. Its pathway is carbohydrate metabolism; tricarboxylic acid cycle; succinate from succinyl-CoA (ligase route): step 1/1. Its function is as follows. Succinyl-CoA synthetase functions in the citric acid cycle (TCA), coupling the hydrolysis of succinyl-CoA to the synthesis of either ATP or GTP and thus represents the only step of substrate-level phosphorylation in the TCA. The beta subunit provides nucleotide specificity of the enzyme and binds the substrate succinate, while the binding sites for coenzyme A and phosphate are found in the alpha subunit. This Acidithiobacillus ferrooxidans (strain ATCC 23270 / DSM 14882 / CIP 104768 / NCIMB 8455) (Ferrobacillus ferrooxidans (strain ATCC 23270)) protein is Succinate--CoA ligase [ADP-forming] subunit beta.